Reading from the N-terminus, the 334-residue chain is Ribosomal RNA small subunit methyltransferase H (334 aa).

Residues 54 to 56 (GGH), D74, F100, D121, and Q128 contribute to the S-adenosyl-L-methionine site. The interval 272–318 (RHSKGQYPEDENLPMPPKRPRYFSKPKRVGPSKAEISNNPRSRSAWL) is disordered. A compositionally biased stretch (basic residues) spans 289–301 (KRPRYFSKPKRVG).

Belongs to the methyltransferase superfamily. RsmH family.

The protein localises to the cytoplasm. The enzyme catalyses cytidine(1402) in 16S rRNA + S-adenosyl-L-methionine = N(4)-methylcytidine(1402) in 16S rRNA + S-adenosyl-L-homocysteine + H(+). Specifically methylates the N4 position of cytidine in position 1402 (C1402) of 16S rRNA. The protein is Ribosomal RNA small subunit methyltransferase H of Psychrobacter arcticus (strain DSM 17307 / VKM B-2377 / 273-4).